A 638-amino-acid chain; its full sequence is SUMO-activating enzyme subunit 2 (638 aa).

ATP-binding positions include 24 to 29 (GAGGIG), Asp48, 56 to 59 (NLNR), Lys72, 95 to 96 (SI), and 117 to 122 (DNRAAR). The Zn(2+) site is built by Cys158 and Cys161. A Glycyl lysine isopeptide (Lys-Gly) (interchain with G-Cter in SUMO1) cross-link involves residue Lys164. Cys173 acts as the Glycyl thioester intermediate in catalysis. Lys190 is covalently cross-linked (Glycyl lysine isopeptide (Lys-Gly) (interchain with G-Cter in SUMO)). The segment at 202–233 (ADQEVSPDRADPEAAWEPTEAEARARASNEDG) is disordered. Ser207 carries the phosphoserine modification. Positions 222–233 (AEARARASNEDG) are enriched in basic and acidic residues. A Glycyl lysine isopeptide (Lys-Gly) (interchain with G-Cter in SUMO1); alternate cross-link involves residue Lys236. Glycyl lysine isopeptide (Lys-Gly) (interchain with G-Cter in SUMO2); alternate cross-links involve residues Lys236 and Lys257. Glycyl lysine isopeptide (Lys-Gly) (interchain with G-Cter in SUMO); alternate cross-links involve residues Lys257 and Lys271. Lys271 bears the N6-acetyllysine; alternate mark. Lys275 is covalently cross-linked (Glycyl lysine isopeptide (Lys-Gly) (interchain with G-Cter in SUMO)). Lys369 is covalently cross-linked (Glycyl lysine isopeptide (Lys-Gly) (interchain with G-Cter in SUMO2)). Lys418 is covalently cross-linked (Glycyl lysine isopeptide (Lys-Gly) (interchain with G-Cter in SUMO1); alternate). Lys418 is covalently cross-linked (Glycyl lysine isopeptide (Lys-Gly) (interchain with G-Cter in SUMO2); alternate). 2 residues coordinate Zn(2+): Cys439 and Cys442. Ser505 bears the Phosphoserine mark. Lys538 is covalently cross-linked (Glycyl lysine isopeptide (Lys-Gly) (interchain with G-Cter in SUMO2)). Phosphoserine is present on residues Ser548 and Ser590. A compositionally biased stretch (basic and acidic residues) spans 548-561 (SPEKVGPKQAEDAA). The segment at 548-638 (SPEKVGPKQA…EDPDDVIALD (91 aa)) is disordered. Residues 581 to 594 (EQDDVLIVDSDEEG) show a composition bias toward acidic residues. Residues 603–614 (GDDKARKRKLEE) are compositionally biased toward basic and acidic residues. Residue Lys609 forms a Glycyl lysine isopeptide (Lys-Gly) (interchain with G-Cter in SUMO) linkage. Lys611 participates in a covalent cross-link: Glycyl lysine isopeptide (Lys-Gly) (interchain with G-Cter in SUMO); alternate. The residue at position 611 (Lys611) is an N6-acetyllysine; alternate. Lys621 is covalently cross-linked (Glycyl lysine isopeptide (Lys-Gly) (interchain with G-Cter in SUMO)). Acidic residues predominate over residues 628–638 (MEDPDDVIALD).

This sequence belongs to the ubiquitin-activating E1 family. In terms of assembly, heterodimer of SAE1 and UBA2/SAE2. The heterodimer corresponds to the two domains that are encoded on a single polypeptide chain in ubiquitin-activating enzyme E1. Interacts with UBE2I. In terms of processing, sumoylated with SUMO1 and SUMO2/3 and by UBC9. Sumoylation at Lys-236 inhibits enzymatic activity. Sumoylation at the C-terminal lysine cluster plays an essential role in nuclear trafficking. Broadly expressed, with highest levels in testis.

It is found in the cytoplasm. The protein resides in the nucleus. It functions in the pathway protein modification; protein sumoylation. Functionally, the heterodimer acts as an E1 ligase for SUMO1, SUMO2, SUMO3, and probably SUMO4. It mediates ATP-dependent activation of SUMO proteins followed by formation of a thioester bond between a SUMO protein and a conserved active site cysteine residue on UBA2/SAE2. In Mus musculus (Mouse), this protein is SUMO-activating enzyme subunit 2 (Uba2).